An 86-amino-acid chain; its full sequence is Large ribosomal subunit protein bL27 (86 aa).

The interval 1–24 is disordered; the sequence is MATKKAGGSSRNGRDSAGRRLGVK.

It belongs to the bacterial ribosomal protein bL27 family.

The sequence is that of Large ribosomal subunit protein bL27 from Rickettsia conorii (strain ATCC VR-613 / Malish 7).